Reading from the N-terminus, the 778-residue chain is Lon protease (778 aa).

A Lon N-terminal domain is found at Leu4–Leu187. Gly346 to Thr353 contacts ATP. One can recognise a Lon proteolytic domain in the interval Thr581 to Pro762. Residues Ser668 and Lys711 contribute to the active site.

It belongs to the peptidase S16 family. As to quaternary structure, homohexamer. Organized in a ring with a central cavity.

It localises to the cytoplasm. The enzyme catalyses Hydrolysis of proteins in presence of ATP.. In terms of biological role, ATP-dependent serine protease that mediates the selective degradation of mutant and abnormal proteins as well as certain short-lived regulatory proteins. Required for cellular homeostasis and for survival from DNA damage and developmental changes induced by stress. Degrades polypeptides processively to yield small peptide fragments that are 5 to 10 amino acids long. Binds to DNA in a double-stranded, site-specific manner. The polypeptide is Lon protease (Salinispora arenicola (strain CNS-205)).